The sequence spans 485 residues: Glutamyl-tRNA(Gln) amidotransferase subunit A (485 aa).

Catalysis depends on charge relay system residues Lys-76 and Ser-151. The active-site Acyl-ester intermediate is the Ser-175.

Belongs to the amidase family. GatA subfamily. As to quaternary structure, heterotrimer of A, B and C subunits.

The catalysed reaction is L-glutamyl-tRNA(Gln) + L-glutamine + ATP + H2O = L-glutaminyl-tRNA(Gln) + L-glutamate + ADP + phosphate + H(+). In terms of biological role, allows the formation of correctly charged Gln-tRNA(Gln) through the transamidation of misacylated Glu-tRNA(Gln) in organisms which lack glutaminyl-tRNA synthetase. The reaction takes place in the presence of glutamine and ATP through an activated gamma-phospho-Glu-tRNA(Gln). The sequence is that of Glutamyl-tRNA(Gln) amidotransferase subunit A from Chlorobium luteolum (strain DSM 273 / BCRC 81028 / 2530) (Pelodictyon luteolum).